The primary structure comprises 176 residues: 2-oxo-4-hydroxy-4-carboxy-5-ureidoimidazoline decarboxylase (176 aa).

His-70 acts as the Proton donor; for OHCU decarboxylase activity in catalysis. Substrate contacts are provided by residues Pro-71, Ser-83 to Gln-87, and Phe-118 to Val-122. Residues Asp-72–Pro-96 form a disordered region.

It belongs to the OHCU decarboxylase family.

It catalyses the reaction 5-hydroxy-2-oxo-4-ureido-2,5-dihydro-1H-imidazole-5-carboxylate + H(+) = (S)-allantoin + CO2. The protein operates within purine metabolism; urate degradation; (S)-allantoin from urate: step 3/3. In terms of biological role, catalyzes the stereoselective decarboxylation of 2-oxo-4-hydroxy-4-carboxy-5-ureidoimidazoline (OHCU) to (S)-allantoin. The sequence is that of 2-oxo-4-hydroxy-4-carboxy-5-ureidoimidazoline decarboxylase from Halalkalicoccus jeotgali (strain DSM 18796 / CECT 7217 / JCM 14584 / KCTC 4019 / B3).